The sequence spans 352 residues: DNA ADP-ribosyl glycohydrolase (352 aa).

The 155-residue stretch at 1-155 (MITYGSGDLL…IYPPSGGSRA (155 aa)) folds into the Macro domain. ADP-D-ribose contacts are provided by residues 8 to 9 (DL), 20 to 22 (TVN), 31 to 34 (IALQ), and Thr-79. Catalysis depends on Lys-80, which acts as the Nucleophile. 117-121 (GVGNG) is a binding site for ADP-D-ribose. The interaction with DarT stretch occupies residues 164-352 (MTWGRAVILE…VALDRILMTA (189 aa)).

The protein belongs to the DarG ADP-ribosyl glycohydrolase family. As to quaternary structure, interacts (via C-terminus) with cognate toxin DarT; this heterodimeric complex neutralizes the toxic effect of DarT by preventing ssDNA binding to DarT and consequently inactivating the toxin by direct protein-protein interactions.

It catalyses the reaction an N-(ADP-alpha-D-ribosyl)-thymidine in DNA + H2O = a thymidine in DNA + ADP-D-ribose. Functionally, antitoxin component of the hybrid type II/IV toxin-antitoxin (TA) system DarTG, which plays a crucial role in controlling bacterial growth and bacteriophage infection. De-ADP-ribosylates DNA (probably) modified on thymidine by its cognate toxin DarT, which neutralizes the activity of cognate toxin DarT. This Mycobacterium bovis (strain BCG / Pasteur 1173P2) protein is DNA ADP-ribosyl glycohydrolase.